The chain runs to 199 residues: Recombination protein RecR (199 aa).

A C4-type zinc finger spans residues 59–74 (CLNCGNVGTSDICALC). One can recognise a Toprim domain in the interval 82–176 (GELCVVEDVA…KLTSLAQGVP (95 aa)).

It belongs to the RecR family.

May play a role in DNA repair. It seems to be involved in an RecBC-independent recombinational process of DNA repair. It may act with RecF and RecO. In Ruegeria sp. (strain TM1040) (Silicibacter sp.), this protein is Recombination protein RecR.